The primary structure comprises 103 residues: Urease subunit beta (103 aa).

This sequence belongs to the urease beta subunit family. Heterotrimer of UreA (gamma), UreB (beta) and UreC (alpha) subunits. Three heterotrimers associate to form the active enzyme.

It localises to the cytoplasm. The catalysed reaction is urea + 2 H2O + H(+) = hydrogencarbonate + 2 NH4(+). Its pathway is nitrogen metabolism; urea degradation; CO(2) and NH(3) from urea (urease route): step 1/1. The sequence is that of Urease subunit beta from Mycobacterium marinum (strain ATCC BAA-535 / M).